The following is an 81-amino-acid chain: Toxin-like peptide AaF1CA5 (81 aa).

The N-terminal stretch at 1-22 (MMKLMLFSIIVILFSLIGSIHG) is a signal peptide. Residues 25-81 (VPGNYPLDSSDDTYLCAPLGENPFCIKICRKHGVKYGLMLRLPCWCEYFGKIKNVKI) enclose the LCN-type CS-alpha/beta domain. 2 disulfides stabilise this stretch: cysteine 49–cysteine 68 and cysteine 53–cysteine 70.

The protein belongs to the long (3 C-C) scorpion toxin superfamily. As to expression, expressed by the venom gland.

Its subcellular location is the secreted. In terms of biological role, probable neurotoxin that inhibits ion channels. This Androctonus australis (Sahara scorpion) protein is Toxin-like peptide AaF1CA5.